The sequence spans 678 residues: Penicillin-binding protein activator LpoA (678 aa).

The signal sequence occupies residues 1–26 (MVPSTFSRLKAARCLPVVLAALIFAG). A lipid anchor (N-palmitoyl cysteine) is attached at cysteine 27. Cysteine 27 is lipidated: S-diacylglycerol cysteine. Low complexity-rich tracts occupy residues 300 to 310 (AADVAEQPQPQ), 330 to 340 (QPAAQPVPVSA), and 513 to 528 (TTNN…DDQF). Disordered regions lie at residues 300–340 (AADV…PVSA) and 496–528 (ALTG…DDQF).

This sequence belongs to the LpoA family. As to quaternary structure, interacts with PBP1a.

It is found in the cell outer membrane. Functionally, regulator of peptidoglycan synthesis that is essential for the function of penicillin-binding protein 1A (PBP1a). The polypeptide is Penicillin-binding protein activator LpoA (Shigella flexneri serotype 5b (strain 8401)).